The primary structure comprises 231 residues: Aquaporin Z (231 aa).

The next 2 helical transmembrane spans lie at 9-29 (CFGTFWLVFGGCGSAVLAAGF) and 34-54 (IGFAGVALAFGLTVLTMAFAV). An NPA 1 motif is present at residues 63–65 (NPA). Transmembrane regions (helical) follow at residues 82 to 102 (VGYVIAQVVGGIVAAALLYLI), 129 to 149 (YSMLSALVVELVLSAGFLLVI), and 156 to 176 (FAPAGFAPIAIGLALTLIHLI). An NPA 2 motif is present at residues 186–188 (NPA). Residues 202–222 (LEQLWFFWVVPIVGGIIGGLI) form a helical membrane-spanning segment.

The protein belongs to the MIP/aquaporin (TC 1.A.8) family. In terms of assembly, homotetramer.

The protein localises to the cell inner membrane. The catalysed reaction is H2O(in) = H2O(out). Its function is as follows. Channel that permits osmotically driven movement of water in both directions. It is involved in the osmoregulation and in the maintenance of cell turgor during volume expansion in rapidly growing cells. It mediates rapid entry or exit of water in response to abrupt changes in osmolarity. The protein is Aquaporin Z of Escherichia coli O157:H7.